The chain runs to 297 residues: Nucleotide-binding protein Bphyt_0592 (297 aa).

8–15 (GISGSGKS) contributes to the ATP binding site. 57-60 (DARS) is a binding site for GTP.

It belongs to the RapZ-like family.

Its function is as follows. Displays ATPase and GTPase activities. The chain is Nucleotide-binding protein Bphyt_0592 from Paraburkholderia phytofirmans (strain DSM 17436 / LMG 22146 / PsJN) (Burkholderia phytofirmans).